We begin with the raw amino-acid sequence, 384 residues long: Trophoblast glycoprotein-like (384 aa).

Residues 1–30 (MAPRAGQRGLWSPLPGLLLLAAALSRPAAP) form the signal peptide. 2 cysteine pairs are disulfide-bonded: cysteine 31/cysteine 37 and cysteine 35/cysteine 47. Over 31 to 309 (CPFQCYCFGS…DVAGPELEAS (279 aa)) the chain is Extracellular. 5 LRR repeats span residues 61-84 (PPDA…AFAG), 95-118 (LPLL…AFDG), 119-142 (LPSL…AFRG), 173-196 (LAEL…ALRL), and 198-219 (RLEQ…ELSA). A glycan (N-linked (GlcNAc...) asparagine) is linked at asparagine 66. 2 disulfide bridges follow: cysteine 240-cysteine 266 and cysteine 242-cysteine 287. A helical membrane pass occupies residues 310-330 (YVFFGLVLALIGLIFLMVLYL). Topologically, residues 331–384 (NRRGIQRWMHNLREACRDQMEGYHYRYEQDADPRRAPAPAAPAGSRATSPGSGL) are cytoplasmic. The tract at residues 361–384 (ADPRRAPAPAAPAGSRATSPGSGL) is disordered. Low complexity predominate over residues 367-384 (PAPAAPAGSRATSPGSGL).

Its subcellular location is the membrane. In Mus musculus (Mouse), this protein is Trophoblast glycoprotein-like (Tpbgl).